Consider the following 388-residue polypeptide: Chorismate synthase (388 aa).

Positions 39 and 45 each coordinate NADP(+). FMN contacts are provided by residues 132-134 (RSS), 251-252 (NA), Gly296, 311-315 (KPIPT), and Arg337.

This sequence belongs to the chorismate synthase family. Homotetramer. It depends on FMNH2 as a cofactor.

The catalysed reaction is 5-O-(1-carboxyvinyl)-3-phosphoshikimate = chorismate + phosphate. Its pathway is metabolic intermediate biosynthesis; chorismate biosynthesis; chorismate from D-erythrose 4-phosphate and phosphoenolpyruvate: step 7/7. Functionally, catalyzes the anti-1,4-elimination of the C-3 phosphate and the C-6 proR hydrogen from 5-enolpyruvylshikimate-3-phosphate (EPSP) to yield chorismate, which is the branch point compound that serves as the starting substrate for the three terminal pathways of aromatic amino acid biosynthesis. This reaction introduces a second double bond into the aromatic ring system. The polypeptide is Chorismate synthase (Staphylococcus epidermidis (strain ATCC 35984 / DSM 28319 / BCRC 17069 / CCUG 31568 / BM 3577 / RP62A)).